The chain runs to 61 residues: Rubredoxin 3 (61 aa).

A Rubredoxin-like domain is found at 1 to 53; that stretch reads MSSYRCPVCEYVYDESKGAPREGFPAGTPWDAVPDDWCCPDCGVREKLDFEPM. Residues Cys6, Cys9, Cys39, and Cys42 each coordinate Fe cation.

This sequence belongs to the rubredoxin family. Requires Fe(3+) as cofactor.

Involved in the hydrocarbon hydroxylating system, which transfers electrons from NADH to rubredoxin reductase and then through rubredoxin to alkane 1 monooxygenase. The chain is Rubredoxin 3 (rubA3) from Rhodococcus erythropolis (Arthrobacter picolinophilus).